The chain runs to 791 residues: Organellar oligopeptidase A, chloroplastic/mitochondrial (791 aa).

The N-terminal 82 residues, 1–82 (MLMATPTSRA…SSPPSMSSAA (82 aa)), are a transit peptide targeting the chloroplast and mitochondrion. 2 coiled-coil regions span residues 118-138 (RPGI…LEKS) and 239-259 (DDEK…LSHK). Residue His-571 participates in Zn(2+) binding. The active site involves Glu-572. Zn(2+) contacts are provided by His-575 and Glu-601. Substrate is bound at residue 703 to 709 (HIFAGGY).

This sequence belongs to the peptidase M3 family. Requires Zn(2+) as cofactor.

Its subcellular location is the mitochondrion matrix. The protein localises to the plastid. It is found in the chloroplast stroma. It catalyses the reaction Hydrolysis of oligopeptides, with broad specificity. Gly or Ala commonly occur as P1 or P1' residues, but more distant residues are also important, as is shown by the fact that Z-Gly-Pro-Gly-|-Gly-Pro-Ala is cleaved, but not Z-(Gly)(5).. Inhibited by salicylic acid. Functionally, oligopeptidase degrading short peptides from 8 to 23 amino acid residues. Plays a role in the degradation of transit peptides and of peptides derived from other proteolytic events. Does not exhibit a strict cleavage pattern. Binds salicylic acid. In Arabidopsis thaliana (Mouse-ear cress), this protein is Organellar oligopeptidase A, chloroplastic/mitochondrial.